Consider the following 186-residue polypeptide: uncharacterized protein (186 aa).

N34 carries N-linked (GlcNAc...) asparagine; by host glycosylation. Transmembrane regions (helical) follow at residues 47 to 67 (IGMV…ATTF), 114 to 134 (ILET…IVLL), and 144 to 164 (LEMI…TLFF).

The protein resides in the membrane. This is an uncharacterized protein from Acanthamoeba polyphaga mimivirus (APMV).